The primary structure comprises 292 residues: 4-hydroxy-tetrahydrodipicolinate synthase (292 aa).

Thr45 is a pyruvate binding site. Tyr133 acts as the Proton donor/acceptor in catalysis. Residue Lys161 is the Schiff-base intermediate with substrate of the active site. Pyruvate is bound at residue Ile203.

Belongs to the DapA family. Homotetramer; dimer of dimers.

It is found in the cytoplasm. It carries out the reaction L-aspartate 4-semialdehyde + pyruvate = (2S,4S)-4-hydroxy-2,3,4,5-tetrahydrodipicolinate + H2O + H(+). It participates in amino-acid biosynthesis; L-lysine biosynthesis via DAP pathway; (S)-tetrahydrodipicolinate from L-aspartate: step 3/4. In terms of biological role, catalyzes the condensation of (S)-aspartate-beta-semialdehyde [(S)-ASA] and pyruvate to 4-hydroxy-tetrahydrodipicolinate (HTPA). The protein is 4-hydroxy-tetrahydrodipicolinate synthase of Aromatoleum aromaticum (strain DSM 19018 / LMG 30748 / EbN1) (Azoarcus sp. (strain EbN1)).